A 239-amino-acid chain; its full sequence is tRNA (guanine-N(1)-)-methyltransferase (239 aa).

S-adenosyl-L-methionine is bound by residues Gly108 and 127 to 132; that span reads LGDFVL.

It belongs to the RNA methyltransferase TrmD family. Homodimer.

The protein localises to the cytoplasm. The enzyme catalyses guanosine(37) in tRNA + S-adenosyl-L-methionine = N(1)-methylguanosine(37) in tRNA + S-adenosyl-L-homocysteine + H(+). Functionally, specifically methylates guanosine-37 in various tRNAs. The sequence is that of tRNA (guanine-N(1)-)-methyltransferase from Streptococcus thermophilus (strain ATCC BAA-250 / LMG 18311).